The sequence spans 344 residues: UDP-3-O-acylglucosamine N-acyltransferase (344 aa).

The active-site Proton acceptor is the histidine 248.

The protein belongs to the transferase hexapeptide repeat family. LpxD subfamily. In terms of assembly, homotrimer.

It catalyses the reaction a UDP-3-O-[(3R)-3-hydroxyacyl]-alpha-D-glucosamine + a (3R)-hydroxyacyl-[ACP] = a UDP-2-N,3-O-bis[(3R)-3-hydroxyacyl]-alpha-D-glucosamine + holo-[ACP] + H(+). Its pathway is bacterial outer membrane biogenesis; LPS lipid A biosynthesis. Its function is as follows. Catalyzes the N-acylation of UDP-3-O-acylglucosamine using 3-hydroxyacyl-ACP as the acyl donor. Is involved in the biosynthesis of lipid A, a phosphorylated glycolipid that anchors the lipopolysaccharide to the outer membrane of the cell. This is UDP-3-O-acylglucosamine N-acyltransferase from Prochlorococcus marinus subsp. pastoris (strain CCMP1986 / NIES-2087 / MED4).